Here is a 420-residue protein sequence, read N- to C-terminus: Putative RNA-binding protein Alsin2 (420 aa).

A coiled-coil region spans residues 99–130 (IADCDRRTDSAKQRLKETQEELTAEVAEKANA). 3 stretches are compositionally biased toward basic and acidic residues: residues 242–259 (AELK…EGRG), 282–363 (RERQ…RFGD), and 373–399 (HHRD…HFRD). Positions 242 to 420 (AELKRTGKMT…SYSRERNYRR (179 aa)) are disordered.

The protein belongs to the Luc7 family. In terms of assembly, interacts with x16 (via Arg/Ser-rich region).

Its function is as follows. May bind to RNA via its Arg/Ser-rich domain. The sequence is that of Putative RNA-binding protein Alsin2 from Drosophila melanogaster (Fruit fly).